The primary structure comprises 785 residues: Pre-rRNA-processing protein TSR1 homolog (785 aa).

Residues 1–59 (MSTTGHRAGVFKKPSKPHKSWKGKRTKGEITSENRGREGVKQLTRSAHSTHRTISKDAR) form a disordered region. Residues 9–25 (GVFKKPSKPHKSWKGKR) are compositionally biased toward basic residues. Positions 26–40 (TKGEITSENRGREGV) are enriched in basic and acidic residues. The Bms1-type G domain maps to 83–243 (APCLVTVVSL…LRILNETKKK (161 aa)). The segment at 307–426 (PHPLKAHNKT…GETTASEMMF (120 aa)) is disordered. Residues 376-409 (LDDEDDEDEEDSDEDMDDSDNEEVEDDSEEEEPM) show a composition bias toward acidic residues.

It belongs to the TRAFAC class translation factor GTPase superfamily. Bms1-like GTPase family. TSR1 subfamily.

The protein localises to the nucleus. It localises to the nucleolus. In terms of biological role, required during maturation of the 40S ribosomal subunit in the nucleolus. The protein is Pre-rRNA-processing protein TSR1 homolog (tag-151) of Caenorhabditis elegans.